A 225-amino-acid polypeptide reads, in one-letter code: NAD(P)H-quinone oxidoreductase subunit K, chloroplastic (225 aa).

[4Fe-4S] cluster-binding residues include C43, C44, C108, and C139.

It belongs to the complex I 20 kDa subunit family. As to quaternary structure, NDH is composed of at least 16 different subunits, 5 of which are encoded in the nucleus. The cofactor is [4Fe-4S] cluster.

It localises to the plastid. The protein resides in the chloroplast thylakoid membrane. The catalysed reaction is a plastoquinone + NADH + (n+1) H(+)(in) = a plastoquinol + NAD(+) + n H(+)(out). The enzyme catalyses a plastoquinone + NADPH + (n+1) H(+)(in) = a plastoquinol + NADP(+) + n H(+)(out). NDH shuttles electrons from NAD(P)H:plastoquinone, via FMN and iron-sulfur (Fe-S) centers, to quinones in the photosynthetic chain and possibly in a chloroplast respiratory chain. The immediate electron acceptor for the enzyme in this species is believed to be plastoquinone. Couples the redox reaction to proton translocation, and thus conserves the redox energy in a proton gradient. This Lemna minor (Common duckweed) protein is NAD(P)H-quinone oxidoreductase subunit K, chloroplastic.